The primary structure comprises 175 residues: Shikimate kinase (175 aa).

14 to 19 (GAGKST) is a binding site for ATP. A Mg(2+)-binding site is contributed by Ser18. Substrate-binding residues include Asp36, Arg60, and Gly82. An ATP-binding site is contributed by Arg120. Arg140 serves as a coordination point for substrate. Gln157 provides a ligand contact to ATP.

Belongs to the shikimate kinase family. Monomer. Mg(2+) serves as cofactor.

The protein localises to the cytoplasm. The catalysed reaction is shikimate + ATP = 3-phosphoshikimate + ADP + H(+). The protein operates within metabolic intermediate biosynthesis; chorismate biosynthesis; chorismate from D-erythrose 4-phosphate and phosphoenolpyruvate: step 5/7. Catalyzes the specific phosphorylation of the 3-hydroxyl group of shikimic acid using ATP as a cosubstrate. The chain is Shikimate kinase from Actinobacillus succinogenes (strain ATCC 55618 / DSM 22257 / CCUG 43843 / 130Z).